Reading from the N-terminus, the 407-residue chain is Tryptophan synthase beta chain (407 aa).

K98 carries the post-translational modification N6-(pyridoxal phosphate)lysine.

This sequence belongs to the TrpB family. As to quaternary structure, tetramer of two alpha and two beta chains. Requires pyridoxal 5'-phosphate as cofactor.

It catalyses the reaction (1S,2R)-1-C-(indol-3-yl)glycerol 3-phosphate + L-serine = D-glyceraldehyde 3-phosphate + L-tryptophan + H2O. The protein operates within amino-acid biosynthesis; L-tryptophan biosynthesis; L-tryptophan from chorismate: step 5/5. Its function is as follows. The beta subunit is responsible for the synthesis of L-tryptophan from indole and L-serine. This Bradyrhizobium sp. (strain ORS 278) protein is Tryptophan synthase beta chain.